The primary structure comprises 95 residues: Cell division topological specificity factor (95 aa).

This sequence belongs to the MinE family.

Functionally, prevents the cell division inhibition by proteins MinC and MinD at internal division sites while permitting inhibition at polar sites. This ensures cell division at the proper site by restricting the formation of a division septum at the midpoint of the long axis of the cell. This chain is Cell division topological specificity factor, found in Microcystis aeruginosa (strain NIES-843 / IAM M-2473).